The primary structure comprises 374 residues: N5-carboxyaminoimidazole ribonucleotide synthase (374 aa).

ATP is bound by residues R108, K148, 153–159 (GYDGKGQ), 183–186 (EKYL), E191, H214, and 266–267 (NE). An ATP-grasp domain is found at 112–296 (KETLKSAGTK…QFDTHILAVT (185 aa)).

The protein belongs to the PurK/PurT family. Homodimer.

It carries out the reaction 5-amino-1-(5-phospho-beta-D-ribosyl)imidazole + hydrogencarbonate + ATP = 5-carboxyamino-1-(5-phospho-D-ribosyl)imidazole + ADP + phosphate + 2 H(+). It participates in purine metabolism; IMP biosynthesis via de novo pathway; 5-amino-1-(5-phospho-D-ribosyl)imidazole-4-carboxylate from 5-amino-1-(5-phospho-D-ribosyl)imidazole (N5-CAIR route): step 1/2. Its function is as follows. Catalyzes the ATP-dependent conversion of 5-aminoimidazole ribonucleotide (AIR) and HCO(3)(-) to N5-carboxyaminoimidazole ribonucleotide (N5-CAIR). This Staphylococcus aureus (strain MRSA252) protein is N5-carboxyaminoimidazole ribonucleotide synthase.